The following is a 379-amino-acid chain: Histidinol-phosphate aminotransferase (379 aa).

Lys231 is modified (N6-(pyridoxal phosphate)lysine).

The protein belongs to the class-II pyridoxal-phosphate-dependent aminotransferase family. Histidinol-phosphate aminotransferase subfamily. Homodimer. Requires pyridoxal 5'-phosphate as cofactor.

It catalyses the reaction L-histidinol phosphate + 2-oxoglutarate = 3-(imidazol-4-yl)-2-oxopropyl phosphate + L-glutamate. It functions in the pathway amino-acid biosynthesis; L-histidine biosynthesis; L-histidine from 5-phospho-alpha-D-ribose 1-diphosphate: step 7/9. This is Histidinol-phosphate aminotransferase from Mycolicibacterium smegmatis (strain ATCC 700084 / mc(2)155) (Mycobacterium smegmatis).